Here is a 286-residue protein sequence, read N- to C-terminus: MSIKKLILAASILTTLALTGCGGKGAVQPSGVSTGDVNAKIVFDNDKVNADNVDGLSVSEREVKITKPGMYTFSGTWNDGQILVDIGKEFEAVLVLDGVNITNTKSAPIYIKSAEKVKIELADGKDNVLTDAEFYEFEDPQDNKPNACIYSRDDITIKGNGNLTVNANFNNGIGTSNDLKITGGNITVKAFNNGLKGNDSVTISGGNIDITAEADGIKVENTEEPHKGYVNITGGTIKIRAKDDAIDSVRSVSINNADVKVSVGGKDVKCEGVLNIAEGCLGKLEE.

Residues 1–20 (MSIKKLILAASILTTLALTG) form the signal peptide. C21 is lipidated: N-palmitoyl cysteine. C21 carries the S-diacylglycerol cysteine lipid modification. Positions 124 to 225 (GKDNVLTDAE…GIKVENTEEP (102 aa)) are polygalacturonic acid-binding. R152, D153, D154, N177, D178, D215, D243, D244, and D247 together coordinate Ca(2+).

Monomer.

It localises to the cell membrane. In terms of biological role, binds cellulosic and pectic substrates. Displays no enzyme activity (in vitro). The protein is Carbohydrate-binding domain-containing protein Cthe_2159 of Acetivibrio thermocellus (strain ATCC 27405 / DSM 1237 / JCM 9322 / NBRC 103400 / NCIMB 10682 / NRRL B-4536 / VPI 7372) (Clostridium thermocellum).